We begin with the raw amino-acid sequence, 127 residues long: Major sperm protein isoform beta (127 aa).

Position 2 is an N-acetylalanine (Ala2). The MSP domain maps to 9 to 126 (DINTQPGSKI…RRKNLPIEYN (118 aa)).

In terms of assembly, forms filaments 10 nm wide, with a characteristic substructure repeating axially at 9 nm. Sperm.

It is found in the cell projection. The protein resides in the pseudopodium. The protein localises to the cytoplasm. It localises to the cytoskeleton. Its function is as follows. Central component in molecular interactions underlying sperm crawling. Forms an extensive filament system that extends from sperm villipoda, along the leading edge of the pseudopod. The chain is Major sperm protein isoform beta from Ascaris suum (Pig roundworm).